We begin with the raw amino-acid sequence, 137 residues long: Large ribosomal subunit protein uL16 (137 aa).

It belongs to the universal ribosomal protein uL16 family. In terms of assembly, part of the 50S ribosomal subunit.

Binds 23S rRNA and is also seen to make contacts with the A and possibly P site tRNAs. This is Large ribosomal subunit protein uL16 from Tolumonas auensis (strain DSM 9187 / NBRC 110442 / TA 4).